The following is a 247-amino-acid chain: V-type proton ATPase subunit D (247 aa).

Belongs to the V-ATPase D subunit family. V-ATPase is a heteromultimeric enzyme made up of two complexes: the ATP-hydrolytic V1 complex and the proton translocation V0 complex. The V1 complex consists of three catalytic AB heterodimers that form a heterohexamer, three peripheral stalks each consisting of EG heterodimers, one central rotor including subunits D and F, and the regulatory subunits C and H. The proton translocation complex V0 consists of the proton transport subunit a, a ring of proteolipid subunits c9c'', rotary subunit d, subunits e and f, and the accessory subunits ATP6AP1/Ac45 and ATP6AP2/PRR. Interacts with SNX10.

Its subcellular location is the membrane. It localises to the cytoplasmic vesicle. It is found in the clathrin-coated vesicle membrane. The protein resides in the cytoplasm. The protein localises to the cytoskeleton. Its subcellular location is the microtubule organizing center. It localises to the centrosome. It is found in the cell projection. The protein resides in the cilium. Subunit of the V1 complex of vacuolar(H+)-ATPase (V-ATPase), a multisubunit enzyme composed of a peripheral complex (V1) that hydrolyzes ATP and a membrane integral complex (V0) that translocates protons. V-ATPase is responsible for acidifying and maintaining the pH of intracellular compartments and in some cell types, is targeted to the plasma membrane, where it is responsible for acidifying the extracellular environment. May play a role in cilium biogenesis through regulation of the transport and the localization of proteins to the cilium. The protein is V-type proton ATPase subunit D (ATP6V1D) of Oryctolagus cuniculus (Rabbit).